A 365-amino-acid chain; its full sequence is Histidinol-phosphate aminotransferase (365 aa).

Lys-223 carries the post-translational modification N6-(pyridoxal phosphate)lysine.

It belongs to the class-II pyridoxal-phosphate-dependent aminotransferase family. Histidinol-phosphate aminotransferase subfamily. In terms of assembly, homodimer. Pyridoxal 5'-phosphate is required as a cofactor.

It catalyses the reaction L-histidinol phosphate + 2-oxoglutarate = 3-(imidazol-4-yl)-2-oxopropyl phosphate + L-glutamate. It functions in the pathway amino-acid biosynthesis; L-histidine biosynthesis; L-histidine from 5-phospho-alpha-D-ribose 1-diphosphate: step 7/9. The chain is Histidinol-phosphate aminotransferase from Bacillus pumilus (strain SAFR-032).